Reading from the N-terminus, the 550-residue chain is Hydroxylamine reductase (550 aa).

Positions 3, 6, 18, and 25 each coordinate [2Fe-2S] cluster. Positions 249, 273, 317, 405, 433, 458, 492, and 494 each coordinate hybrid [4Fe-2O-2S] cluster. At Cys405 the chain carries Cysteine persulfide.

It belongs to the HCP family. It depends on [2Fe-2S] cluster as a cofactor. Hybrid [4Fe-2O-2S] cluster is required as a cofactor.

It localises to the cytoplasm. It carries out the reaction A + NH4(+) + H2O = hydroxylamine + AH2 + H(+). Functionally, catalyzes the reduction of hydroxylamine to form NH(3) and H(2)O. The protein is Hydroxylamine reductase of Shigella boydii serotype 18 (strain CDC 3083-94 / BS512).